A 100-amino-acid chain; its full sequence is MSGNRKRNTSEPREDDEDDYSTKRKRNNEAVNRTRQKKRQEENDTAEKVDELKKENETLERKVEQLQKELSFLKEMFMAYAKNDGNDGPPPPPPPSSSAV.

Disordered regions lie at residues 1-60 (MSGN…ETLE) and 79-100 (AYAK…SSAV). Residues 17-80 (EDDYSTKRKR…SFLKEMFMAY (64 aa)) form the bZIP domain. The basic motif stretch occupies residues 23-48 (KRKRNNEAVNRTRQKKRQEENDTAEK). A coiled-coil region spans residues 24 to 83 (RKRNNEAVNRTRQKKRQEENDTAEKVDELKKENETLERKVEQLQKELSFLKEMFMAYAKN). The segment covering 39 to 60 (RQEENDTAEKVDELKKENETLE) has biased composition (basic and acidic residues). Residues 52–73 (LKKENETLERKVEQLQKELSFL) are leucine-zipper. Positions 88 to 100 (GPPPPPPPSSSAV) are enriched in pro residues.

It belongs to the bZIP family. C/EBP subfamily. As to quaternary structure, interacts with transcription factor zip-11. Expressed broadly in somatic tissues including the intestine.

It is found in the nucleus. Its function is as follows. Transcription factor that binds to the promoter and the enhancer regions of target genes. Regulates expression of genes involved in fat metabolism, including ech-1.1 and fat-5. Has a protective role in response to infection by the Gram-negative bacterium P.aeruginosa. Required for the activation of infection response gene irg-1 following P.aeruginosa infection. Required to prevent P.aeruginosa ToxA-mediated lethality. May also function in concert with transcription factor zip-11 to mediate immune responses, independently of the pmk-1/p38 MAPK pathway. May act together with the bZIP transcription factor, zip-2. This chain is CCAAT/enhancer-binding protein homolog 2, found in Caenorhabditis elegans.